The sequence spans 757 residues: RNA-directed RNA polymerase catalytic subunit (757 aa).

Residues 50-82 (SEKGKWTTNTETGAPQLNPIDGPLPEDNEPSGY) are disordered. Over residues 55–64 (WTTNTETGAP) the composition is skewed to polar residues. 2 consecutive short sequence motifs (nuclear localization signal) follow at residues 187-195 (RKRRVRDNM) and 203-216 (RTIG…NKRS). The promoter-binding site stretch occupies residues 249–256 (RGFVYFVE). The RdRp catalytic domain occupies 286–483 (VRKMMTNSQD…GINMSKKKSY (198 aa)).

This sequence belongs to the influenza viruses polymerase PB1 family. In terms of assembly, influenza RNA polymerase is composed of three subunits: PB1, PB2 and PA. Interacts (via N-terminus) with PA (via C-terminus). Interacts (via C-terminus) with PB2 (via N-terminus); this interaction is essential for transcription initiation. In terms of processing, phosphorylated by host PRKCA.

Its subcellular location is the host nucleus. It is found in the host cytoplasm. It catalyses the reaction RNA(n) + a ribonucleoside 5'-triphosphate = RNA(n+1) + diphosphate. Functionally, RNA-dependent RNA polymerase which is responsible for replication and transcription of virus RNA segments. The transcription of viral mRNAs occurs by a unique mechanism called cap-snatching. 5' methylated caps of cellular mRNAs are cleaved after 10-13 nucleotides by PA. In turn, these short capped RNAs are used as primers by PB1 for transcription of viral mRNAs. During virus replication, PB1 initiates RNA synthesis and copy vRNA into complementary RNA (cRNA) which in turn serves as a template for the production of more vRNAs. The chain is RNA-directed RNA polymerase catalytic subunit from Influenza A virus (strain A/Memphis/101/1972 H3N2).